A 424-amino-acid polypeptide reads, in one-letter code: Glutamate-1-semialdehyde 2,1-aminomutase (424 aa).

K263 bears the N6-(pyridoxal phosphate)lysine mark.

It belongs to the class-III pyridoxal-phosphate-dependent aminotransferase family. HemL subfamily. In terms of assembly, homodimer. The cofactor is pyridoxal 5'-phosphate.

It localises to the cytoplasm. The catalysed reaction is (S)-4-amino-5-oxopentanoate = 5-aminolevulinate. The protein operates within porphyrin-containing compound metabolism; protoporphyrin-IX biosynthesis; 5-aminolevulinate from L-glutamyl-tRNA(Glu): step 2/2. This Campylobacter jejuni subsp. doylei (strain ATCC BAA-1458 / RM4099 / 269.97) protein is Glutamate-1-semialdehyde 2,1-aminomutase.